The chain runs to 433 residues: Tol-Pal system protein TolB (433 aa).

The signal sequence occupies residues 1-21 (MIKRLRGLLVLLCCVAGMAMA).

This sequence belongs to the TolB family. The Tol-Pal system is composed of five core proteins: the inner membrane proteins TolA, TolQ and TolR, the periplasmic protein TolB and the outer membrane protein Pal. They form a network linking the inner and outer membranes and the peptidoglycan layer.

It localises to the periplasm. Part of the Tol-Pal system, which plays a role in outer membrane invagination during cell division and is important for maintaining outer membrane integrity. The polypeptide is Tol-Pal system protein TolB (Pseudomonas entomophila (strain L48)).